Consider the following 161-residue polypeptide: Allophycocyanin beta chain (161 aa).

N71 carries the N4-methylasparagine modification. (2R,3E)-phycocyanobilin is bound at residue C81.

It belongs to the phycobiliprotein family. In terms of assembly, heterodimer of an alpha and a beta chain. Contains one covalently linked phycocyanobilin chromophore.

It is found in the plastid. The protein resides in the chloroplast thylakoid membrane. Its function is as follows. Light-harvesting photosynthetic bile pigment-protein from the phycobiliprotein complex. Allophycocyanin has a maximum absorption at approximately 650 nanometers. This chain is Allophycocyanin beta chain (apcB), found in Porphyra purpurea (Red seaweed).